A 597-amino-acid chain; its full sequence is Fructan 1-exohydrolase (597 aa).

The first 15 residues, 1 to 15, serve as a signal peptide directing secretion; the sequence is MAQAWAFLLPVLVFG. The active site involves Asp-76. 3 N-linked (GlcNAc...) asparagine glycosylation sites follow: Asn-169, Asn-237, and Asn-249. A disulfide bond links Cys-447 and Cys-493. An N-linked (GlcNAc...) asparagine glycan is attached at Asn-568.

It belongs to the glycosyl hydrolase 32 family.

The enzyme catalyses Hydrolysis of terminal, non-reducing (2-&gt;1)-linked beta-D-fructofuranose residues in fructans.. Its activity is regulated as follows. Inhibited by sucrose. In terms of biological role, hydrolyzes inulin-type beta-(2,1)-fructans. May play a role as a beta-(2,1)-trimmer during graminan biosynthesis. In Triticum urartu (Red wild einkorn), this protein is Fructan 1-exohydrolase.